A 153-amino-acid polypeptide reads, in one-letter code: Large ribosomal subunit protein bL9 (153 aa).

It belongs to the bacterial ribosomal protein bL9 family.

Binds to the 23S rRNA. This chain is Large ribosomal subunit protein bL9, found in Koribacter versatilis (strain Ellin345).